The primary structure comprises 251 residues: Triosephosphate isomerase (251 aa).

Residue 9-11 (NWK) coordinates substrate. Catalysis depends on H95, which acts as the Electrophile. E167 acts as the Proton acceptor in catalysis. Substrate contacts are provided by residues G173, S213, and 234–235 (GG). A Phosphoserine modification is found at S213.

It belongs to the triosephosphate isomerase family. As to quaternary structure, homodimer.

Its subcellular location is the cytoplasm. The enzyme catalyses D-glyceraldehyde 3-phosphate = dihydroxyacetone phosphate. Its pathway is carbohydrate biosynthesis; gluconeogenesis. The protein operates within carbohydrate degradation; glycolysis; D-glyceraldehyde 3-phosphate from glycerone phosphate: step 1/1. Involved in the gluconeogenesis. Catalyzes stereospecifically the conversion of dihydroxyacetone phosphate (DHAP) to D-glyceraldehyde-3-phosphate (G3P). The sequence is that of Triosephosphate isomerase from Priestia megaterium (strain DSM 319 / IMG 1521) (Bacillus megaterium).